We begin with the raw amino-acid sequence, 233 residues long: tRNA (guanine-N(7)-)-methyltransferase (233 aa).

S-adenosyl-L-methionine is bound by residues Glu-62, Glu-87, Asp-116, and Asp-138. Asp-138 is a catalytic residue. Substrate contacts are provided by residues Lys-142, Asp-174, and 212–215 (TRYE).

This sequence belongs to the class I-like SAM-binding methyltransferase superfamily. TrmB family.

The enzyme catalyses guanosine(46) in tRNA + S-adenosyl-L-methionine = N(7)-methylguanosine(46) in tRNA + S-adenosyl-L-homocysteine. The protein operates within tRNA modification; N(7)-methylguanine-tRNA biosynthesis. In terms of biological role, catalyzes the formation of N(7)-methylguanine at position 46 (m7G46) in tRNA. This chain is tRNA (guanine-N(7)-)-methyltransferase, found in Bartonella quintana (strain Toulouse) (Rochalimaea quintana).